The sequence spans 501 residues: Dynein regulatory complex subunit 5 (501 aa).

Positions 1 to 23 are enriched in polar residues; it reads MQETVTTSALLDPSHSSVSTQDK. Disordered stretches follow at residues 1–56 and 203–222; these read MQET…HPGA and PAQL…EMEE. The segment covering 24-34 has biased composition (low complexity); the sequence is SSTGGHTSSTG. A compositionally biased stretch (polar residues) spans 35–49; that stretch reads PQPSKPSITPVSAKS. LRR repeat units lie at residues 308-321, 335-355, 363-383, 391-411, and 419-439; these read VLEE…LIGD, RLRV…QSLA, NLIS…QALA, CLTT…TLLS, and TLTS…KQLL.

It belongs to the DRC5 family. As to quaternary structure, component of the nexin-dynein regulatory complex (N-DRC). Interacts with DRC1. Interacts with FBXL13/DRC6, DRC3 and DRC7.

It localises to the cell projection. The protein resides in the cilium. Its subcellular location is the flagellum. The protein localises to the cytoplasm. It is found in the cytoskeleton. It localises to the flagellum axoneme. In terms of biological role, component of the nexin-dynein regulatory complex (N-DRC) a key regulator of ciliary/flagellar motility which maintains the alignment and integrity of the distal axoneme and regulates microtubule sliding in motile axonemes. May play a role in the assembly of N-DRC. May be required for sperm motility. This is Dynein regulatory complex subunit 5 (TCTE1) from Macaca fascicularis (Crab-eating macaque).